The primary structure comprises 377 residues: Succinyl-diaminopimelate desuccinylase (377 aa).

Residue histidine 68 participates in Zn(2+) binding. Aspartate 70 is a catalytic residue. Aspartate 101 is a Zn(2+) binding site. Glutamate 135 (proton acceptor) is an active-site residue. Zn(2+) contacts are provided by glutamate 136, glutamate 164, and histidine 350.

Belongs to the peptidase M20A family. DapE subfamily. Homodimer. It depends on Zn(2+) as a cofactor. Co(2+) is required as a cofactor.

It carries out the reaction N-succinyl-(2S,6S)-2,6-diaminopimelate + H2O = (2S,6S)-2,6-diaminopimelate + succinate. It participates in amino-acid biosynthesis; L-lysine biosynthesis via DAP pathway; LL-2,6-diaminopimelate from (S)-tetrahydrodipicolinate (succinylase route): step 3/3. In terms of biological role, catalyzes the hydrolysis of N-succinyl-L,L-diaminopimelic acid (SDAP), forming succinate and LL-2,6-diaminopimelate (DAP), an intermediate involved in the bacterial biosynthesis of lysine and meso-diaminopimelic acid, an essential component of bacterial cell walls. The polypeptide is Succinyl-diaminopimelate desuccinylase (Aliivibrio fischeri (strain ATCC 700601 / ES114) (Vibrio fischeri)).